The primary structure comprises 187 residues: Elongation factor P (187 aa).

K34 is modified (N6-(3,6-diaminohexanoyl)-5-hydroxylysine).

This sequence belongs to the elongation factor P family. Post-translationally, may be beta-lysylated on the epsilon-amino group of Lys-34 by the combined action of EpmA and EpmB, and then hydroxylated on the C5 position of the same residue by EpmC (if this protein is present). Lysylation is critical for the stimulatory effect of EF-P on peptide-bond formation. The lysylation moiety may extend toward the peptidyltransferase center and stabilize the terminal 3-CCA end of the tRNA. Hydroxylation of the C5 position on Lys-34 may allow additional potential stabilizing hydrogen-bond interactions with the P-tRNA.

It is found in the cytoplasm. The protein operates within protein biosynthesis; polypeptide chain elongation. Involved in peptide bond synthesis. Alleviates ribosome stalling that occurs when 3 or more consecutive Pro residues or the sequence PPG is present in a protein, possibly by augmenting the peptidyl transferase activity of the ribosome. Modification of Lys-34 is required for alleviation. The chain is Elongation factor P from Vesicomyosocius okutanii subsp. Calyptogena okutanii (strain HA).